We begin with the raw amino-acid sequence, 388 residues long: 1-deoxy-D-xylulose 5-phosphate reductoisomerase (388 aa).

7 residues coordinate NADPH: Thr-13, Gly-14, Ser-15, Ile-16, Arg-40, Asn-41, and Asn-124. Lys-125 contributes to the 1-deoxy-D-xylulose 5-phosphate binding site. Glu-126 is an NADPH binding site. Position 150 (Asp-150) interacts with Mn(2+). 1-deoxy-D-xylulose 5-phosphate-binding residues include Ser-151, Glu-152, Ser-176, and His-199. Mn(2+) is bound at residue Glu-152. Gly-205 contributes to the NADPH binding site. 4 residues coordinate 1-deoxy-D-xylulose 5-phosphate: Ser-212, Asn-217, Lys-218, and Glu-221. Glu-221 contacts Mn(2+).

Belongs to the DXR family. Homodimer. The cofactor is Mg(2+). Mn(2+) is required as a cofactor. It depends on Co(2+) as a cofactor.

The enzyme catalyses 2-C-methyl-D-erythritol 4-phosphate + NADP(+) = 1-deoxy-D-xylulose 5-phosphate + NADPH + H(+). Its pathway is isoprenoid biosynthesis; isopentenyl diphosphate biosynthesis via DXP pathway; isopentenyl diphosphate from 1-deoxy-D-xylulose 5-phosphate: step 1/6. With respect to regulation, competitively inhibited by the antibiotic fosmidomycin. Its function is as follows. Catalyzes the NADPH-dependent rearrangement and reduction of 1-deoxy-D-xylulose-5-phosphate (DXP) to 2-C-methyl-D-erythritol 4-phosphate (MEP). Cannot use NADH instead of NADPH as the reducing agent. This chain is 1-deoxy-D-xylulose 5-phosphate reductoisomerase, found in Zymomonas mobilis subsp. mobilis (strain ATCC 31821 / ZM4 / CP4).